Here is a 277-residue protein sequence, read N- to C-terminus: Probable septum site-determining protein MinC (277 aa).

The tract at residues 137–164 (ATTGNAPAEPAPAEPAAPAAAPQPPAVP) is disordered. A compositionally biased stretch (pro residues) spans 145 to 164 (EPAPAEPAAPAAAPQPPAVP).

Belongs to the MinC family. As to quaternary structure, interacts with MinD and FtsZ.

Functionally, cell division inhibitor that blocks the formation of polar Z ring septums. Rapidly oscillates between the poles of the cell to destabilize FtsZ filaments that have formed before they mature into polar Z rings. Prevents FtsZ polymerization. The polypeptide is Probable septum site-determining protein MinC (Bordetella petrii (strain ATCC BAA-461 / DSM 12804 / CCUG 43448)).